A 29-amino-acid polypeptide reads, in one-letter code: Bacteriocin (29 aa).

It localises to the secreted. Has antibacterial activity against strains of L.monocytogenes, L.lactis, B.subtilis, S.typhi, S.aureus, C.perfringens, E.aerogenes and M.luteus but not against E.coli, S.sonnei, S.pneumoniae, S.faecalis, P.aeruginosa, K.pneumoniae or P.vulgaris. This Lactococcus lactis subsp. lactis (Streptococcus lactis) protein is Bacteriocin.